The primary structure comprises 394 residues: 8-amino-7-oxononanoate synthase (394 aa).

A substrate-binding site is contributed by arginine 21. A pyridoxal 5'-phosphate-binding site is contributed by 112–113; that stretch reads GY. Histidine 137 provides a ligand contact to substrate. Serine 183, histidine 211, and threonine 239 together coordinate pyridoxal 5'-phosphate. Residue lysine 242 is modified to N6-(pyridoxal phosphate)lysine. Threonine 358 serves as a coordination point for substrate.

The protein belongs to the class-II pyridoxal-phosphate-dependent aminotransferase family. BioF subfamily. In terms of assembly, homodimer. It depends on pyridoxal 5'-phosphate as a cofactor.

The catalysed reaction is 6-carboxyhexanoyl-[ACP] + L-alanine + H(+) = (8S)-8-amino-7-oxononanoate + holo-[ACP] + CO2. The protein operates within cofactor biosynthesis; biotin biosynthesis. Its function is as follows. Catalyzes the decarboxylative condensation of pimeloyl-[acyl-carrier protein] and L-alanine to produce 8-amino-7-oxononanoate (AON), [acyl-carrier protein], and carbon dioxide. The chain is 8-amino-7-oxononanoate synthase from Burkholderia cenocepacia (strain ATCC BAA-245 / DSM 16553 / LMG 16656 / NCTC 13227 / J2315 / CF5610) (Burkholderia cepacia (strain J2315)).